Here is a 64-residue protein sequence, read N- to C-terminus: Large ribosomal subunit protein uL29 (64 aa).

The protein belongs to the universal ribosomal protein uL29 family.

This Paraburkholderia phytofirmans (strain DSM 17436 / LMG 22146 / PsJN) (Burkholderia phytofirmans) protein is Large ribosomal subunit protein uL29.